The following is a 396-amino-acid chain: 2,3-diketo-5-methylthiopentyl-1-phosphate enolase (396 aa).

Catalysis depends on lysine 85, which acts as the Proton acceptor. Substrate is bound by residues lysine 134, 160-163, histidine 251, glycine 323, and 345-346; these read KDDE and GG. 3 residues coordinate Mg(2+): lysine 160, aspartate 162, and glutamate 163. Lysine 160 is modified (N6-carboxylysine).

Belongs to the RuBisCO large chain family. Type IV subfamily. In terms of assembly, homodimer. It depends on Mg(2+) as a cofactor.

The enzyme catalyses 5-methylsulfanyl-2,3-dioxopentyl phosphate = 2-hydroxy-5-methylsulfanyl-3-oxopent-1-enyl phosphate. The protein operates within amino-acid biosynthesis; L-methionine biosynthesis via salvage pathway; L-methionine from S-methyl-5-thio-alpha-D-ribose 1-phosphate: step 3/6. Its function is as follows. Catalyzes the enolization of 2,3-diketo-5-methylthiopentyl-1-phosphate (DK-MTP-1-P) into 2-hydroxy-3-keto-5-methylthiopentenyl-1-phosphate (HK-MTPenyl-1-P). In Exiguobacterium sibiricum (strain DSM 17290 / CCUG 55495 / CIP 109462 / JCM 13490 / 255-15), this protein is 2,3-diketo-5-methylthiopentyl-1-phosphate enolase.